A 210-amino-acid chain; its full sequence is Imidazole glycerol phosphate synthase subunit HisH (210 aa).

One can recognise a Glutamine amidotransferase type-1 domain in the interval methionine 1–glycine 205. Cysteine 79 (nucleophile) is an active-site residue. Residues histidine 180 and glutamate 182 contribute to the active site.

Heterodimer of HisH and HisF.

The protein localises to the cytoplasm. The catalysed reaction is 5-[(5-phospho-1-deoxy-D-ribulos-1-ylimino)methylamino]-1-(5-phospho-beta-D-ribosyl)imidazole-4-carboxamide + L-glutamine = D-erythro-1-(imidazol-4-yl)glycerol 3-phosphate + 5-amino-1-(5-phospho-beta-D-ribosyl)imidazole-4-carboxamide + L-glutamate + H(+). It catalyses the reaction L-glutamine + H2O = L-glutamate + NH4(+). It functions in the pathway amino-acid biosynthesis; L-histidine biosynthesis; L-histidine from 5-phospho-alpha-D-ribose 1-diphosphate: step 5/9. Functionally, IGPS catalyzes the conversion of PRFAR and glutamine to IGP, AICAR and glutamate. The HisH subunit catalyzes the hydrolysis of glutamine to glutamate and ammonia as part of the synthesis of IGP and AICAR. The resulting ammonia molecule is channeled to the active site of HisF. This chain is Imidazole glycerol phosphate synthase subunit HisH, found in Herpetosiphon aurantiacus (strain ATCC 23779 / DSM 785 / 114-95).